Consider the following 143-residue polypeptide: Photosystem I reaction center subunit IV B, chloroplastic (143 aa).

The transit peptide at 1–51 directs the protein to the chloroplast; that stretch reads MASSSMASAASGFMVATPNIATSNTAPRTSMLFFSSSKNNTTTNFPRLVVR. A compositionally biased stretch (low complexity) spans 56–75; the sequence is AAPPAATATAEGEAPPAKAA. The disordered stretch occupies residues 56–86; that stretch reads AAPPAATATAEGEAPPAKAAKPPPIGPKRGT.

This sequence belongs to the PsaE family. In terms of processing, 2 isoforms exists (ratio 1:1). With or without the N-terminal alanine.

The protein localises to the plastid. Its subcellular location is the chloroplast thylakoid membrane. Its function is as follows. Stabilizes the interaction between PsaC and the PSI core, assists the docking of the ferredoxin to PSI and interacts with ferredoxin-NADP oxidoreductase. This Nicotiana sylvestris (Wood tobacco) protein is Photosystem I reaction center subunit IV B, chloroplastic (PSAEB).